The primary structure comprises 466 residues: Ribulose bisphosphate carboxylase large chain (466 aa).

Lys-4 carries the post-translational modification N6,N6,N6-trimethyllysine. Positions 113 and 163 each coordinate substrate. Catalysis depends on Lys-165, which acts as the Proton acceptor. Lys-167 is a substrate binding site. Mg(2+) contacts are provided by Lys-191, Asp-193, and Glu-194. Lys-191 is subject to N6-carboxylysine. His-284 acts as the Proton acceptor in catalysis. Residues Arg-285, His-317, and Ser-369 each contribute to the substrate site.

This sequence belongs to the RuBisCO large chain family. Type I subfamily. As to quaternary structure, heterohexadecamer of 8 large chains and 8 small chains; disulfide-linked. The disulfide link is formed within the large subunit homodimers. Mg(2+) is required as a cofactor. In terms of processing, the disulfide bond which can form in the large chain dimeric partners within the hexadecamer appears to be associated with oxidative stress and protein turnover.

It is found in the plastid. The protein resides in the chloroplast. The enzyme catalyses 2 (2R)-3-phosphoglycerate + 2 H(+) = D-ribulose 1,5-bisphosphate + CO2 + H2O. The catalysed reaction is D-ribulose 1,5-bisphosphate + O2 = 2-phosphoglycolate + (2R)-3-phosphoglycerate + 2 H(+). Functionally, ruBisCO catalyzes two reactions: the carboxylation of D-ribulose 1,5-bisphosphate, the primary event in carbon dioxide fixation, as well as the oxidative fragmentation of the pentose substrate in the photorespiration process. Both reactions occur simultaneously and in competition at the same active site. The protein is Ribulose bisphosphate carboxylase large chain of Barleria prionitis (Porcupine flower).